Here is an 891-residue protein sequence, read N- to C-terminus: Microtubule-associated protein 10 (891 aa).

Disordered regions lie at residues alanine 325–isoleucine 355, glutamate 401–glycine 457, serine 504–cysteine 679, and threonine 702–serine 844. Residues proline 407–serine 417 show a composition bias toward low complexity. Composition is skewed to polar residues over residues valine 509–proline 520 and proline 527–proline 544. Basic and acidic residues-rich tracts occupy residues serine 577–methionine 592 and threonine 645–glutamine 658. Polar residues-rich tracts occupy residues alanine 665 to cysteine 679, threonine 702 to glycine 718, serine 726 to leucine 749, glutamate 776 to threonine 790, and lysine 826 to serine 844.

Interacts (via middle region) with microtubules.

It localises to the cytoplasm. The protein resides in the cytoskeleton. Its subcellular location is the spindle pole. The protein localises to the microtubule organizing center. It is found in the centrosome. It localises to the midbody. Microtubule-associated protein (MAP) that plays a role in the regulation of cell division; promotes microtubule stability and participates in the organization of the spindle midzone and normal progress of cytokinesis. This chain is Microtubule-associated protein 10 (Map10), found in Mus musculus (Mouse).